The primary structure comprises 374 residues: Queuine tRNA-ribosyltransferase (374 aa).

Residue Asp-89 is the Proton acceptor of the active site. Residues 89-93, Asp-143, Gln-187, and Gly-214 each bind substrate; that span reads DSGGF. Residues 245-251 form an RNA binding region; it reads GVGKPED. Asp-264 (nucleophile) is an active-site residue. Positions 269–273 are RNA binding; important for wobble base 34 recognition; it reads TRNAR. Cys-302, Cys-304, Cys-307, and His-333 together coordinate Zn(2+).

This sequence belongs to the queuine tRNA-ribosyltransferase family. Homodimer. Within each dimer, one monomer is responsible for RNA recognition and catalysis, while the other monomer binds to the replacement base PreQ1. The cofactor is Zn(2+).

It carries out the reaction 7-aminomethyl-7-carbaguanine + guanosine(34) in tRNA = 7-aminomethyl-7-carbaguanosine(34) in tRNA + guanine. Its pathway is tRNA modification; tRNA-queuosine biosynthesis. Functionally, catalyzes the base-exchange of a guanine (G) residue with the queuine precursor 7-aminomethyl-7-deazaguanine (PreQ1) at position 34 (anticodon wobble position) in tRNAs with GU(N) anticodons (tRNA-Asp, -Asn, -His and -Tyr). Catalysis occurs through a double-displacement mechanism. The nucleophile active site attacks the C1' of nucleotide 34 to detach the guanine base from the RNA, forming a covalent enzyme-RNA intermediate. The proton acceptor active site deprotonates the incoming PreQ1, allowing a nucleophilic attack on the C1' of the ribose to form the product. After dissociation, two additional enzymatic reactions on the tRNA convert PreQ1 to queuine (Q), resulting in the hypermodified nucleoside queuosine (7-(((4,5-cis-dihydroxy-2-cyclopenten-1-yl)amino)methyl)-7-deazaguanosine). The protein is Queuine tRNA-ribosyltransferase of Serratia proteamaculans (strain 568).